A 192-amino-acid chain; its full sequence is Adenylate kinase (192 aa).

Residue 10–15 (GAGKGT) participates in ATP binding. Residues 30–59 (STGDMLREVIRRETEIGKKAKAMINAGTLV) are NMP. AMP is bound by residues Thr31, Arg36, 57 to 59 (TLV), 85 to 88 (GYPR), and Gln92. The segment at 126–142 (KRVQETIIAGGQVRSDD) is LID. Arg127 is a binding site for ATP. Arg139 and Arg150 together coordinate AMP. Ile178 is an ATP binding site.

The protein belongs to the adenylate kinase family. As to quaternary structure, monomer.

The protein resides in the cytoplasm. It carries out the reaction AMP + ATP = 2 ADP. The protein operates within purine metabolism; AMP biosynthesis via salvage pathway; AMP from ADP: step 1/1. Its function is as follows. Catalyzes the reversible transfer of the terminal phosphate group between ATP and AMP. Plays an important role in cellular energy homeostasis and in adenine nucleotide metabolism. The sequence is that of Adenylate kinase from Bartonella henselae (strain ATCC 49882 / DSM 28221 / CCUG 30454 / Houston 1) (Rochalimaea henselae).